The following is a 450-amino-acid chain: tRNA modification GTPase MnmE (450 aa).

Residues R23, E80, and R123 each contribute to the (6S)-5-formyl-5,6,7,8-tetrahydrofolate site. In terms of domain architecture, TrmE-type G spans 219-372 (GLHVVLAGKP…LRQRLLQLAG (154 aa)). Residue N229 coordinates K(+). Residues 229-234 (NVGKSS), 248-254 (TPIAGTT), 273-276 (DTAG), and 353-355 (SAR) contribute to the GTP site. S233 provides a ligand contact to Mg(2+). The K(+) site is built by T248, I250, and T253. Residue T254 coordinates Mg(2+). Position 450 (K450) interacts with (6S)-5-formyl-5,6,7,8-tetrahydrofolate.

The protein belongs to the TRAFAC class TrmE-Era-EngA-EngB-Septin-like GTPase superfamily. TrmE GTPase family. Homodimer. Heterotetramer of two MnmE and two MnmG subunits. K(+) is required as a cofactor.

The protein resides in the cytoplasm. Exhibits a very high intrinsic GTPase hydrolysis rate. Involved in the addition of a carboxymethylaminomethyl (cmnm) group at the wobble position (U34) of certain tRNAs, forming tRNA-cmnm(5)s(2)U34. The sequence is that of tRNA modification GTPase MnmE from Bordetella parapertussis (strain 12822 / ATCC BAA-587 / NCTC 13253).